The sequence spans 507 residues: Glycerol kinase (507 aa).

ADP is bound at residue threonine 13. Residues threonine 13, threonine 14, and serine 15 each coordinate ATP. Position 13 (threonine 13) interacts with sn-glycerol 3-phosphate. An ADP-binding site is contributed by arginine 17. 4 residues coordinate sn-glycerol 3-phosphate: arginine 83, glutamate 84, tyrosine 135, and aspartate 245. Glycerol is bound by residues arginine 83, glutamate 84, tyrosine 135, aspartate 245, and glutamine 246. The ADP site is built by threonine 267 and glycine 310. Threonine 267, glycine 310, glutamine 314, and glycine 411 together coordinate ATP. 2 residues coordinate ADP: glycine 411 and asparagine 415.

This sequence belongs to the FGGY kinase family.

It carries out the reaction glycerol + ATP = sn-glycerol 3-phosphate + ADP + H(+). It participates in polyol metabolism; glycerol degradation via glycerol kinase pathway; sn-glycerol 3-phosphate from glycerol: step 1/1. Its activity is regulated as follows. Inhibited by fructose 1,6-bisphosphate (FBP). In terms of biological role, key enzyme in the regulation of glycerol uptake and metabolism. Catalyzes the phosphorylation of glycerol to yield sn-glycerol 3-phosphate. The sequence is that of Glycerol kinase from Halorhodospira halophila (strain DSM 244 / SL1) (Ectothiorhodospira halophila (strain DSM 244 / SL1)).